Consider the following 237-residue polypeptide: Ribonuclease PH (237 aa).

Phosphate is bound by residues arginine 86 and 124-126 (GTR).

The protein belongs to the RNase PH family. In terms of assembly, homohexameric ring arranged as a trimer of dimers.

The enzyme catalyses tRNA(n+1) + phosphate = tRNA(n) + a ribonucleoside 5'-diphosphate. Phosphorolytic 3'-5' exoribonuclease that plays an important role in tRNA 3'-end maturation. Removes nucleotide residues following the 3'-CCA terminus of tRNAs; can also add nucleotides to the ends of RNA molecules by using nucleoside diphosphates as substrates, but this may not be physiologically important. Probably plays a role in initiation of 16S rRNA degradation (leading to ribosome degradation) during starvation. The chain is Ribonuclease PH from Methylocella silvestris (strain DSM 15510 / CIP 108128 / LMG 27833 / NCIMB 13906 / BL2).